Consider the following 291-residue polypeptide: GTP-binding protein RHO4 (291 aa).

A compositionally biased stretch (polar residues) spans 14–31 (GNESNIVSQGSPSSSNLP). The segment at 14 to 45 (GNESNIVSQGSPSSSNLPESPGTLDEKNLPRL) is disordered. Position 79–86 (79–86 (GDGAVGKT)) interacts with GTP. Residues 101–109 (YIPTIFENY) carry the Effector region motif. GTP contacts are provided by residues 127–131 (DTAGQ) and 185–188 (LKSD). Positions 250-273 (THTIKNPFKRNTTRSDIDSSTGDT) are disordered. 3 positions are modified to phosphoserine: serine 264, serine 268, and serine 276. Cysteine 288 is subject to Cysteine methyl ester. Cysteine 288 carries the S-farnesyl cysteine lipid modification. Residues 289–291 (IIM) constitute a propeptide, removed in mature form.

It belongs to the small GTPase superfamily. Rho family. Interacts with BEM4.

The protein resides in the cell membrane. It catalyses the reaction GTP + H2O = GDP + phosphate + H(+). In terms of biological role, plays an important role in cell growth. Required to keep the uninucleated state. May be involved in the organization of the cytoskeleton which affects microtubule functions. Most likely RHO3 and RHO4 of S.cerevisiae regulate partially overlapping but different pathways. In Saccharomyces cerevisiae (strain ATCC 204508 / S288c) (Baker's yeast), this protein is GTP-binding protein RHO4 (RHO4).